Here is a 485-residue protein sequence, read N- to C-terminus: Bifunctional protein GlmU (485 aa).

The tract at residues methionine 1–arginine 241 is pyrophosphorylase. UDP-N-acetyl-alpha-D-glucosamine is bound by residues leucine 13–glycine 16, lysine 27, glutamine 84, and glycine 89–threonine 90. A Mg(2+)-binding site is contributed by aspartate 114. UDP-N-acetyl-alpha-D-glucosamine contacts are provided by glycine 151, glutamate 166, asparagine 181, and asparagine 239. Position 239 (asparagine 239) interacts with Mg(2+). The segment at valine 242–glycine 262 is linker. The tract at residues glycine 263–glycine 485 is N-acetyltransferase. The UDP-N-acetyl-alpha-D-glucosamine site is built by arginine 344 and lysine 362. Histidine 374 serves as the catalytic Proton acceptor. Residues tyrosine 377 and asparagine 388 each contribute to the UDP-N-acetyl-alpha-D-glucosamine site. Acetyl-CoA is bound by residues alanine 391, asparagine 397–tyrosine 398, serine 416, and alanine 434. Residues arginine 465–glycine 485 are disordered. Residues alanine 469 to glutamine 478 show a composition bias toward low complexity.

It in the N-terminal section; belongs to the N-acetylglucosamine-1-phosphate uridyltransferase family. The protein in the C-terminal section; belongs to the transferase hexapeptide repeat family. Homotrimer. Mg(2+) serves as cofactor.

The protein resides in the cytoplasm. It catalyses the reaction alpha-D-glucosamine 1-phosphate + acetyl-CoA = N-acetyl-alpha-D-glucosamine 1-phosphate + CoA + H(+). It carries out the reaction N-acetyl-alpha-D-glucosamine 1-phosphate + UTP + H(+) = UDP-N-acetyl-alpha-D-glucosamine + diphosphate. Its pathway is nucleotide-sugar biosynthesis; UDP-N-acetyl-alpha-D-glucosamine biosynthesis; N-acetyl-alpha-D-glucosamine 1-phosphate from alpha-D-glucosamine 6-phosphate (route II): step 2/2. The protein operates within nucleotide-sugar biosynthesis; UDP-N-acetyl-alpha-D-glucosamine biosynthesis; UDP-N-acetyl-alpha-D-glucosamine from N-acetyl-alpha-D-glucosamine 1-phosphate: step 1/1. It participates in bacterial outer membrane biogenesis; LPS lipid A biosynthesis. In terms of biological role, catalyzes the last two sequential reactions in the de novo biosynthetic pathway for UDP-N-acetylglucosamine (UDP-GlcNAc). The C-terminal domain catalyzes the transfer of acetyl group from acetyl coenzyme A to glucosamine-1-phosphate (GlcN-1-P) to produce N-acetylglucosamine-1-phosphate (GlcNAc-1-P), which is converted into UDP-GlcNAc by the transfer of uridine 5-monophosphate (from uridine 5-triphosphate), a reaction catalyzed by the N-terminal domain. The protein is Bifunctional protein GlmU of Corynebacterium glutamicum (strain ATCC 13032 / DSM 20300 / JCM 1318 / BCRC 11384 / CCUG 27702 / LMG 3730 / NBRC 12168 / NCIMB 10025 / NRRL B-2784 / 534).